The primary structure comprises 175 residues: ATP synthase subunit b, chloroplastic (175 aa).

Residues 24–46 form a helical membrane-spanning segment; sequence VLNLAVVLAIVLTYVGDALRGLL.

The protein belongs to the ATPase B chain family. As to quaternary structure, F-type ATPases have 2 components, F(1) - the catalytic core - and F(0) - the membrane proton channel. F(1) has five subunits: alpha(3), beta(3), gamma(1), delta(1), epsilon(1). F(0) has four main subunits: a(1), b(1), b'(1) and c(10-14). The alpha and beta chains form an alternating ring which encloses part of the gamma chain. F(1) is attached to F(0) by a central stalk formed by the gamma and epsilon chains, while a peripheral stalk is formed by the delta, b and b' chains.

It localises to the plastid. It is found in the chloroplast thylakoid membrane. Its function is as follows. F(1)F(0) ATP synthase produces ATP from ADP in the presence of a proton or sodium gradient. F-type ATPases consist of two structural domains, F(1) containing the extramembraneous catalytic core and F(0) containing the membrane proton channel, linked together by a central stalk and a peripheral stalk. During catalysis, ATP synthesis in the catalytic domain of F(1) is coupled via a rotary mechanism of the central stalk subunits to proton translocation. In terms of biological role, component of the F(0) channel, it forms part of the peripheral stalk, linking F(1) to F(0). This is ATP synthase subunit b, chloroplastic from Chlorella vulgaris (Green alga).